The primary structure comprises 595 residues: Protein halfway (595 aa).

Disordered regions lie at residues 1–42 and 64–98; these read MLLT…ADDE and TGAATEATHSQPVVTAVPATSSTSTSTTVPAPLLP. 2 N-linked (GlcNAc...) asparagine glycosylation sites follow: asparagine 250 and asparagine 255. The 56-residue stretch at 347–402 folds into the LRRNT domain; the sequence is ESTKRCMTKCPVIPNYGSCKCRFESIMIIQDDQSKPKCHVDCSNLGLVELPPRLPD. 3 LRR repeats span residues 403–424, 429–450, and 454–475; these read NTFVLNITNNKITSLGDHFQTN, NINRLVADNNQISSIYEFEGTK, and NFQRIYMRNNSLSKIPEYFLNN. The 50-residue stretch at 489–538 folds into the LRRCT domain; the sequence is NKLQCDCNSAKTLQNWLKERSTDIPDYMEIRCRNIPQSVIELQEAKLCQS.

In terms of biological role, has a role in the ecdysone induced cascade; probably indirect control of 'late' ecdysone genes. The sequence is that of Protein halfway (hfw) from Drosophila pseudoobscura pseudoobscura (Fruit fly).